A 400-amino-acid chain; its full sequence is Enoyl-[acyl-carrier-protein] reductase [NADH] (400 aa).

Residues 48–53 (GSSSGY), 74–75 (FE), 111–112 (DA), and 139–140 (LA) each bind NAD(+). Y225 provides a ligand contact to substrate. Y235 functions as the Proton donor in the catalytic mechanism. Residues K244 and 273 to 275 (VVT) each bind NAD(+).

This sequence belongs to the TER reductase family. Monomer.

It carries out the reaction a 2,3-saturated acyl-[ACP] + NAD(+) = a (2E)-enoyl-[ACP] + NADH + H(+). It functions in the pathway lipid metabolism; fatty acid biosynthesis. In terms of biological role, involved in the final reduction of the elongation cycle of fatty acid synthesis (FAS II). Catalyzes the reduction of a carbon-carbon double bond in an enoyl moiety that is covalently linked to an acyl carrier protein (ACP). This is Enoyl-[acyl-carrier-protein] reductase [NADH] from Shewanella denitrificans (strain OS217 / ATCC BAA-1090 / DSM 15013).